The following is a 1032-amino-acid chain: UPF0182 protein sll1060 (1032 aa).

9 helical membrane passes run 27-49 (WVKGAIVLAIALVGLEVIARIYV), 69-87 (WQGSIALITGFISWGFIVF), 144-166 (VLLPLIIVLQLILISLVMYYVFI), 197-219 (FSGMGSQLGVTALAGMLALIGVL), 226-248 (PGLVFILSAVWGLLLSGNWFRLL), 283-300 (WWRGLFLFSLLGVTLIIL), 321-339 (HISALGAAVALTLGVEHWL), 364-386 (LPVETGLAIFSMAIAIWLGWLSV), and 406-428 (IIGLWLPVAVYLLILLLQNLGGW).

Belongs to the UPF0182 family.

The protein resides in the cell membrane. This Synechocystis sp. (strain ATCC 27184 / PCC 6803 / Kazusa) protein is UPF0182 protein sll1060.